A 434-amino-acid polypeptide reads, in one-letter code: Transcription factor AP-2-epsilon (434 aa).

Positions 30–123 are disordered; it reads LNQGPYSSAP…GLSLDPRRDY (94 aa). A compositionally biased stretch (pro residues) spans 52-62; sequence PYFPPPYPQPP. Positions 53–58 match the PPxY motif motif; it reads YFPPPY. Residues 81 to 97 show a composition bias toward polar residues; that stretch reads SSINSIHHQHQQPSWHT. Residues 278–408 are H-S-H (helix-span-helix), dimerization; sequence RRKAANVTLL…YLLESLKGMD (131 aa). The segment at 415-434 is disordered; it reads TGNGHSAAESKSEKDIKHRK. Residues 422-434 are compositionally biased toward basic and acidic residues; the sequence is AESKSEKDIKHRK.

Belongs to the AP-2 family. As to quaternary structure, binds DNA as a dimer. Can form homodimers or heterodimers with other AP-2 family members.

Its subcellular location is the nucleus. Its function is as follows. Sequence-specific DNA-binding protein that interacts with inducible viral and cellular enhancer elements to regulate transcription of selected genes. AP-2 factors bind to the consensus sequence 5'-GCCNNNGGC-3' and activate genes involved in a large spectrum of important biological functions. This is Transcription factor AP-2-epsilon from Xenopus laevis (African clawed frog).